Reading from the N-terminus, the 215-residue chain is Phosphatidylserine decarboxylase proenzyme (215 aa).

Serine 186 (schiff-base intermediate with substrate; via pyruvic acid) is an active-site residue. Pyruvic acid (Ser); by autocatalysis is present on serine 186.

Belongs to the phosphatidylserine decarboxylase family. PSD-A subfamily. Heterodimer of a large membrane-associated beta subunit and a small pyruvoyl-containing alpha subunit. Pyruvate is required as a cofactor. Post-translationally, is synthesized initially as an inactive proenzyme. Formation of the active enzyme involves a self-maturation process in which the active site pyruvoyl group is generated from an internal serine residue via an autocatalytic post-translational modification. Two non-identical subunits are generated from the proenzyme in this reaction, and the pyruvate is formed at the N-terminus of the alpha chain, which is derived from the carboxyl end of the proenzyme. The post-translation cleavage follows an unusual pathway, termed non-hydrolytic serinolysis, in which the side chain hydroxyl group of the serine supplies its oxygen atom to form the C-terminus of the beta chain, while the remainder of the serine residue undergoes an oxidative deamination to produce ammonia and the pyruvoyl prosthetic group on the alpha chain.

It is found in the cell membrane. It carries out the reaction a 1,2-diacyl-sn-glycero-3-phospho-L-serine + H(+) = a 1,2-diacyl-sn-glycero-3-phosphoethanolamine + CO2. It participates in phospholipid metabolism; phosphatidylethanolamine biosynthesis; phosphatidylethanolamine from CDP-diacylglycerol: step 2/2. Catalyzes the formation of phosphatidylethanolamine (PtdEtn) from phosphatidylserine (PtdSer). The protein is Phosphatidylserine decarboxylase proenzyme of Pelagibacter ubique (strain HTCC1062).